A 163-amino-acid polypeptide reads, in one-letter code: Small ribosomal subunit protein bS18c (163 aa).

Disordered regions lie at residues 1-52 (MYIS…IGPG) and 144-163 (NLRN…SSDC). The segment covering 7 to 48 (PFRKSKQPFRKSKQTFHKSKQPFRKFKQPFRKSKQPFRRRSR) has biased composition (basic residues).

The protein belongs to the bacterial ribosomal protein bS18 family. As to quaternary structure, part of the 30S ribosomal subunit.

Its subcellular location is the plastid. The protein resides in the chloroplast. The chain is Small ribosomal subunit protein bS18c from Sorghum bicolor (Sorghum).